An 840-amino-acid polypeptide reads, in one-letter code: Probable alpha-glucuronidase A (840 aa).

A signal peptide spans 1 to 19 (MWSGIPIFALLSSIGIAAA). N-linked (GlcNAc...) asparagine glycosylation is found at Asn50, Asn149, Asn222, Asn262, Asn279, Asn310, Asn465, Asn527, Asn576, Asn610, Asn682, Asn723, and Asn732.

This sequence belongs to the glycosyl hydrolase 67 family.

It is found in the secreted. The enzyme catalyses an alpha-D-glucuronoside + H2O = D-glucuronate + an alcohol. Alpha-glucuronidase involved in the hydrolysis of xylan, a major structural heterogeneous polysaccharide found in plant biomass representing the second most abundant polysaccharide in the biosphere, after cellulose. Releases 4-O-methylglucuronic acid from xylan. The sequence is that of Probable alpha-glucuronidase A (aguA) from Aspergillus fumigatus (strain ATCC MYA-4609 / CBS 101355 / FGSC A1100 / Af293) (Neosartorya fumigata).